An 89-amino-acid polypeptide reads, in one-letter code: Large ribosomal subunit protein eL34 (89 aa).

Residues 1–32 form a disordered region; sequence MPAPRFKSGSFKKISKRGPGNKTLTHHRRSKV.

This sequence belongs to the eukaryotic ribosomal protein eL34 family.

The chain is Large ribosomal subunit protein eL34 from Methanococcus aeolicus (strain ATCC BAA-1280 / DSM 17508 / OCM 812 / Nankai-3).